Here is a 417-residue protein sequence, read N- to C-terminus: Gamma-glutamyl phosphate reductase (417 aa).

This sequence belongs to the gamma-glutamyl phosphate reductase family.

The protein localises to the cytoplasm. The catalysed reaction is L-glutamate 5-semialdehyde + phosphate + NADP(+) = L-glutamyl 5-phosphate + NADPH + H(+). It functions in the pathway amino-acid biosynthesis; L-proline biosynthesis; L-glutamate 5-semialdehyde from L-glutamate: step 2/2. Its function is as follows. Catalyzes the NADPH-dependent reduction of L-glutamate 5-phosphate into L-glutamate 5-semialdehyde and phosphate. The product spontaneously undergoes cyclization to form 1-pyrroline-5-carboxylate. This Streptococcus agalactiae serotype III (strain NEM316) protein is Gamma-glutamyl phosphate reductase.